A 252-amino-acid chain; its full sequence is Petrobactin import ATP-binding protein YclP (252 aa).

The ABC transporter domain maps to 2-236 (VEVRNVSKQY…SVLEEIYDMT (235 aa)). 34 to 41 (GPNGAGKS) provides a ligand contact to ATP.

The protein belongs to the ABC transporter superfamily. As to quaternary structure, the complex is composed of two ATP-binding proteins (YclP), two transmembrane proteins (YclN and YclO) and a solute-binding protein (YclQ).

Its subcellular location is the cell membrane. The catalysed reaction is a Fe(III)-siderophore(out) + ATP + H2O = a Fe(III)-siderophore(in) + ADP + phosphate + H(+). In terms of biological role, part of the ABC transporter complex YclNOPQ involved in uptake of ferric-petrobactin. Petrobactin is a photoreactive 3,4-catecholate siderophore produced by many members of the B.cereus group, including B.anthracis. Probably responsible for energy coupling to the transport system. This Bacillus subtilis (strain 168) protein is Petrobactin import ATP-binding protein YclP (yclP).